A 577-amino-acid polypeptide reads, in one-letter code: Moesin (577 aa).

Positions 2 to 295 (PKTINVRVTT…GNHELYMRRR (294 aa)) constitute an FERM domain. Serine 74 carries the post-translational modification Phosphoserine. Lysine 79 carries the N6-acetyllysine modification. Residue lysine 83 is modified to N6-succinyllysine. The [IL]-x-C-x-x-[DE] motif signature appears at 115 to 120 (IYCPPE). Residue tyrosine 116 is modified to Phosphotyrosine. Cysteine 117 carries the post-translational modification S-nitrosocysteine. An N6-acetyllysine mark is found at lysine 139 and lysine 165. A compositionally biased stretch (basic and acidic residues) spans 376–414 (EQERKRAQSEAEKLAKERQEAEEAKEALLKASRDQKKTQ). 2 disordered regions span residues 376–415 (EQER…KTQE) and 434–518 (ARQK…NERV). Serine 407 bears the Phosphoserine mark. A compositionally biased stretch (acidic residues) spans 476-487 (AENDQDEQDENG). Over residues 492–518 (ADLRADAMAKDRSEEERTTEAEKNERV) the composition is skewed to basic and acidic residues. Serine 527 carries the post-translational modification Phosphoserine. Residue threonine 558 is modified to Phosphothreonine; by ROCK2 and STK10.

In terms of assembly, binds NHERF1. In resting T-cells, part of a PAG1-NHERF1-MSN complex which is disrupted upon TCR activation. Interacts with PPP1R16B. Interacts with PDZD8. Interacts with SELPLG and SYK; mediates the activation of SYK by SELPLG. Interacts with PDPN (via cytoplasmic domain); activates RHOA and promotes epithelial-mesenchymal transition. Interacts with SPN/CD43 cytoplasmic tail, CD44 and ICAM2. In terms of processing, phosphorylation on Thr-558 is crucial for the formation of microvilli-like structures. Phosphorylation by ROCK2 suppresses the head-to-tail association of the N-terminal and C-terminal halves resulting in an opened conformation which is capable of actin and membrane-binding. Phosphorylation on Thr-558 by STK10 negatively regulates lymphocyte migration and polarization. S-nitrosylation of Cys-117 is induced by interferon-gamma and oxidatively-modified low-densitity lipoprotein (LDL(ox)) implicating the iNOS-S100A8/9 transnitrosylase complex.

It is found in the cell membrane. The protein resides in the cytoplasm. Its subcellular location is the cytoskeleton. It localises to the apical cell membrane. The protein localises to the cell projection. It is found in the microvillus membrane. The protein resides in the microvillus. A head-to-tail association, of the N-terminal and C-terminal halves results in a closed conformation (inactive form) which is incapable of actin or membrane-binding. Its function is as follows. Probably involved in connections of major cytoskeletal structures to the plasma membrane. Plays a role in regulating the proliferation, migration, and adhesion of human lymphoid cells and participates in immunologic synapse formation. The chain is Moesin from Sus scrofa (Pig).